A 255-amino-acid chain; its full sequence is Octanoyltransferase (255 aa).

A BPL/LPL catalytic domain is found at 54–238 (GDANELVWLL…SFTTIFGATV (185 aa)). Substrate is bound by residues 92-99 (RGGQLTYH), 167-169 (AIG), and 180-182 (GIA). The active-site Acyl-thioester intermediate is Cys198.

It belongs to the LipB family.

The protein resides in the cytoplasm. The enzyme catalyses octanoyl-[ACP] + L-lysyl-[protein] = N(6)-octanoyl-L-lysyl-[protein] + holo-[ACP] + H(+). It participates in protein modification; protein lipoylation via endogenous pathway; protein N(6)-(lipoyl)lysine from octanoyl-[acyl-carrier-protein]: step 1/2. Its function is as follows. Catalyzes the transfer of endogenously produced octanoic acid from octanoyl-acyl-carrier-protein onto the lipoyl domains of lipoate-dependent enzymes. Lipoyl-ACP can also act as a substrate although octanoyl-ACP is likely to be the physiological substrate. The chain is Octanoyltransferase from Rhodopseudomonas palustris (strain BisB5).